The following is a 1705-amino-acid chain: MILKSFLLGNLVSLCMKIINSVVVVGLYYGFLTTFSIGPSYLFLLRAHVMEEGEEGAEKKVSATTGFITGQLIMFISIYYAPLHLALGRPHTITVLALPYLLFHFFCNSKKNFLDYGSTTRNSMRNLSIQCVFLNNLIFQLLNHFILPSSMLARLVNIFMFRCNSKMLFVTSSFVGWIIGHILFMKWVGLLLVWIRQNRSIRKYIQANKYLVLELKNSMSMAGIFSIFLLVTCVHYLGRIPSPIFSTKLNMLEKMEEEEEFDNNEEEEFDNNEEEEFDNNKTVDYMYGNQENLKFKILEKKQKDEEKNFFLFEKPILTFFFDYNRWNRPLRYIRKINKKLKGSVRKEASQYFFYTCQSDGKQRISFTYPPSLSTFGEMIARRISLSTLEKISPDELYTEWVFTNKEKKNNLNNEFINRIEALETVFLSLNILEAKTRLSNAETKNKNNCLVKMYDPFLNGMYRGRMKKLFSSSIINETSIENCTETAELNKIHDILLPYPNSPENEQKIERSEKKKRKIDSNNGLKFSLNEILTNPKREKKYIGINEIGKKPPRWSYKLINELEQYFKKRRKEQGIMQGLDHQLRTRKFKHIAFLTRSERSFKKSHFKNYNLYRKFNRDSGFISYLEEPDFRRAVIKDSMRVQRRKMVIWGPSQGNPHSPLFLEKMEDFPFPISDLMKLFFNIRDWLGKKSEFEILDQQFQIKKNNQEDVIEFWENIPYAQKSRSVLLLAQSIFRRYIKLPLLIIAKNIGRILLRQSPEWYEDFQDWNREIYLKCNYNGLQFSKTEFPKNWLIEGFQIKILYPFHLKPWHRSKLRLSDRDRKQQDDFDSCFLTVLGMETEYPFGPPRKTPSFFEPIFKDIDYKVEIRKFNFRIRRALKKIKKKEAKVFFFVKQILKELLKGKKIPLFITREIYESNETEREKDSIISNKIIHESLSQNRPKGLTNYSQTEEEMKHRIDRRNTIRNQIEIMKKNKKTVTLKKKINKKNNGEALPTIWKILKRNNIELIVKIFIEKIYIDIFLCIINMRRIALQLFMESTKKIIEKYIDNNETNKEKINKTKQNQIDFISTRTIKKAFDNLRNSKRKSNIFFELSYLSQKYVFLKLSQTQVIHFNKLRSILQYNGPSFFLKNEIKDFFGRQGIFDYEVRHKKLPNSGMNPWKNWLRGHYQYDLSQITWSRLVPQKWRNGKNQCQPSQNKDLNKWYSYEKDQLFDYKKKQNLKVYLLSNKEENFQKNYRYDRLSYKYIHSETNKKSYIYRSSLEPNKKQENSTRNKEKTVNILKNIPIKNYLGKSDIIYMEKNTDRKYLGWKLNTNIQVESNKDQIQIRDKIPNNGLFYLPIYSNSEINYKRVFFDWMGMPFDWMGMNEKFLILNRPISNPKFFLFPEFLILYHKYKEKPWFIPSNLLLFNLNINPNFSENQNIKGKHEEDEDFFNFSPSNSKQYFELKNQNNIEESLLESIEKLQILIKGDFPLQLRWTGRLNQLNQKMMNNIQIYGLLVSLINVRKISISYIQRKEMNLDIMRRRLNLTQLTKKGILIMEPARLSVKNDGQFFMYQIIGISLVHKSKHQSNQRYRNPQNVAKNHFDESIPRHKTLNRDKKNSDLLVPEKILSSRRRRELRILISFNLKNQNNVHRKKFFCKENKIKNWSQFLDESENFDRKKNELIKLKFFFWPNYRLEDLACMNRYWFDTNNGSRFSMLRIYMYP.

5 helical membrane passes run 18–38 (IINS…FSIG), 67–87 (FITG…HLAL), 127–147 (LSIQ…HFIL), 175–195 (VGWI…LVWI), and 218–238 (SMSM…HYLG).

This sequence belongs to the TIC214 family. Part of the Tic complex.

It localises to the plastid. It is found in the chloroplast inner membrane. Functionally, involved in protein precursor import into chloroplasts. May be part of an intermediate translocation complex acting as a protein-conducting channel at the inner envelope. The chain is Protein TIC 214 from Helianthus annuus (Common sunflower).